The sequence spans 469 residues: MLSTEMPLPTTGSTLLKTPASPSPNQNLLPLTAVINKNGELEIGGCSVPALVEQFGSPLYILDETTLRQAAQQYRQSFQAHYPGSSQVIYASKAWSCLAVVAIAAQEGLGFDVVSGGELFTTVSALKQLGWDEAEIAEKIYFHGNNKSVQELQEAIAINCTIIVDNWLELETLTKLAADSGAPVKIMLRLTPGIECHTHEYIKTGHLDSKFGFDPNQLEAVFTYIAQQPSLHCLGLHAHIGSQIFERQPHKDLGEVLVQWFTKGLTYGLPLTELNIGGGLGICYTESDDPPSIEEWAQVAAISVAKACDRQNIPYPKLIAEPGRSLVGSACVTAYRVGGRKVVPNIRTYISVDGGMSDNPRPITYQSVYRVALANRMNDEITETVTVAGKHCESGDILVKDVALPAAEPGDIMVVAATGAYNHSMASNYNRLGRPAAVLVNQGQANLILQRETYTDLLRQDCLPNRLLS.

The interval 1–23 is disordered; sequence MLSTEMPLPTTGSTLLKTPASPS. Residue K93 is modified to N6-(pyridoxal phosphate)lysine. Residues G279 and 321–324 contribute to the pyridoxal 5'-phosphate site; that span reads EPGR. Residues R324, R361, and Y365 each coordinate substrate. C392 functions as the Proton donor in the catalytic mechanism. Residues E393 and Y421 each coordinate substrate. Y421 contacts pyridoxal 5'-phosphate.

Belongs to the Orn/Lys/Arg decarboxylase class-II family. LysA subfamily. As to quaternary structure, homodimer. Pyridoxal 5'-phosphate serves as cofactor.

It carries out the reaction meso-2,6-diaminopimelate + H(+) = L-lysine + CO2. It participates in amino-acid biosynthesis; L-lysine biosynthesis via DAP pathway; L-lysine from DL-2,6-diaminopimelate: step 1/1. Specifically catalyzes the decarboxylation of meso-diaminopimelate (meso-DAP) to L-lysine. The sequence is that of Diaminopimelate decarboxylase from Synechocystis sp. (strain ATCC 27184 / PCC 6803 / Kazusa).